Here is a 311-residue protein sequence, read N- to C-terminus: Protoheme IX farnesyltransferase 1 (311 aa).

9 consecutive transmembrane segments (helical) span residues 31-51 (VMAL…GAVN), 52-72 (PVIA…AGAL), 97-117 (VTPG…VMTL), 119-139 (VLVG…YIVI), 152-172 (IVIG…AATG), 179-199 (LVLF…LALF), 225-245 (ILAY…FGFT), 247-267 (GYYG…SWKV), and 281-301 (LFAY…ADTI).

The protein belongs to the UbiA prenyltransferase family. Protoheme IX farnesyltransferase subfamily.

Its subcellular location is the cell inner membrane. It carries out the reaction heme b + (2E,6E)-farnesyl diphosphate + H2O = Fe(II)-heme o + diphosphate. Its pathway is porphyrin-containing compound metabolism; heme O biosynthesis; heme O from protoheme: step 1/1. Its function is as follows. Converts heme B (protoheme IX) to heme O by substitution of the vinyl group on carbon 2 of heme B porphyrin ring with a hydroxyethyl farnesyl side group. The sequence is that of Protoheme IX farnesyltransferase 1 from Mesorhizobium japonicum (strain LMG 29417 / CECT 9101 / MAFF 303099) (Mesorhizobium loti (strain MAFF 303099)).